Consider the following 316-residue polypeptide: Putative ubiquitin-conjugating enzyme E2 39 (316 aa).

Positions 57 to 217 constitute a UBC core domain; that stretch reads NWVKDIQKEW…VFVFSLKTMH (161 aa). The Glycyl thioester intermediate role is filled by C143.

The protein belongs to the ubiquitin-conjugating enzyme family.

It catalyses the reaction S-ubiquitinyl-[E1 ubiquitin-activating enzyme]-L-cysteine + [E2 ubiquitin-conjugating enzyme]-L-cysteine = [E1 ubiquitin-activating enzyme]-L-cysteine + S-ubiquitinyl-[E2 ubiquitin-conjugating enzyme]-L-cysteine.. It participates in protein modification; protein ubiquitination. In terms of biological role, accepts the ubiquitin from the E1 complex and catalyzes its covalent attachment to other proteins. The polypeptide is Putative ubiquitin-conjugating enzyme E2 39 (UBC39) (Arabidopsis thaliana (Mouse-ear cress)).